A 257-amino-acid chain; its full sequence is 1-acyl-sn-glycerol-3-phosphate acyltransferase (257 aa).

The chain crosses the membrane as a helical span at residues 10 to 30 (VLFYLLLSASAFVWGTLSFFI). The HXXXXD motif motif lies at 82 to 87 (HQSTWE). A helical transmembrane segment spans residues 105–125 (ELLYVPFFGWALALLKPIAID).

Belongs to the 1-acyl-sn-glycerol-3-phosphate acyltransferase family.

Its subcellular location is the cell inner membrane. It catalyses the reaction a 1-acyl-sn-glycero-3-phosphate + an acyl-CoA = a 1,2-diacyl-sn-glycero-3-phosphate + CoA. It functions in the pathway phospholipid metabolism; CDP-diacylglycerol biosynthesis; CDP-diacylglycerol from sn-glycerol 3-phosphate: step 2/3. Its function is as follows. Converts lysophosphatidic acid (LPA) into phosphatidic acid by incorporating acyl moiety at the 2 position. The chain is 1-acyl-sn-glycerol-3-phosphate acyltransferase from Pseudomonas aeruginosa (strain ATCC 15692 / DSM 22644 / CIP 104116 / JCM 14847 / LMG 12228 / 1C / PRS 101 / PAO1).